The sequence spans 194 residues: Erythropoietin (194 aa).

The N-terminal stretch at 1-26 (MGARECPARLLLLSLLLLPLGLPVLG) is a signal peptide. 2 disulfides stabilise this stretch: C33–C189 and C55–C59. N50 carries N-linked (GlcNAc...) asparagine glycosylation. Residues N64, N109, and N172 are each glycosylated (N-linked (GlcNAc...) asparagine).

This sequence belongs to the EPO/TPO family. As to expression, produced by kidney or liver of adult mammals and by liver of fetal or neonatal mammals.

The protein localises to the secreted. In terms of biological role, hormone involved in the regulation of erythrocyte proliferation and differentiation and the maintenance of a physiological level of circulating erythrocyte mass. Binds to EPOR leading to EPOR dimerization and JAK2 activation thereby activating specific downstream effectors, including STAT1 and STAT3. The sequence is that of Erythropoietin (EPO) from Sus scrofa (Pig).